A 264-amino-acid chain; its full sequence is Ribosomal protein L11 methyltransferase (264 aa).

S-adenosyl-L-methionine-binding residues include Thr116, Gly137, Asp159, and Asn200.

Belongs to the methyltransferase superfamily. PrmA family.

Its subcellular location is the cytoplasm. It catalyses the reaction L-lysyl-[protein] + 3 S-adenosyl-L-methionine = N(6),N(6),N(6)-trimethyl-L-lysyl-[protein] + 3 S-adenosyl-L-homocysteine + 3 H(+). In terms of biological role, methylates ribosomal protein L11. This is Ribosomal protein L11 methyltransferase from Thermotoga neapolitana.